A 413-amino-acid polypeptide reads, in one-letter code: S-adenosylmethionine synthase (413 aa).

H15 contributes to the ATP binding site. Residue D17 participates in Mg(2+) binding. E43 contributes to the K(+) binding site. L-methionine-binding residues include E56 and Q100. The segment at 100–110 is flexible loop; that stretch reads QSPDISQGVNE. ATP-binding positions include 171-173, 248-249, D257, 263-264, A280, and K284; these read DGK, KF, and RK. D257 serves as a coordination point for L-methionine. K288 is an L-methionine binding site.

Belongs to the AdoMet synthase family. As to quaternary structure, homotetramer; dimer of dimers. Mg(2+) is required as a cofactor. Requires K(+) as cofactor.

It localises to the cytoplasm. It catalyses the reaction L-methionine + ATP + H2O = S-adenosyl-L-methionine + phosphate + diphosphate. The protein operates within amino-acid biosynthesis; S-adenosyl-L-methionine biosynthesis; S-adenosyl-L-methionine from L-methionine: step 1/1. Catalyzes the formation of S-adenosylmethionine (AdoMet) from methionine and ATP. The overall synthetic reaction is composed of two sequential steps, AdoMet formation and the subsequent tripolyphosphate hydrolysis which occurs prior to release of AdoMet from the enzyme. The protein is S-adenosylmethionine synthase of Prochlorococcus marinus subsp. pastoris (strain CCMP1986 / NIES-2087 / MED4).